A 130-amino-acid polypeptide reads, in one-letter code: S-adenosylmethionine decarboxylase proenzyme (130 aa).

Ser-63 acts as the Schiff-base intermediate with substrate; via pyruvic acid in catalysis. Position 63 is a pyruvic acid (Ser); by autocatalysis (Ser-63). His-68 serves as the catalytic Proton acceptor; for processing activity. The active-site Proton donor; for catalytic activity is Cys-83.

The protein belongs to the prokaryotic AdoMetDC family. Type 1 subfamily. As to quaternary structure, heterotetramer of two alpha and two beta chains arranged as a dimer of alpha/beta heterodimers. Requires pyruvate as cofactor. Post-translationally, is synthesized initially as an inactive proenzyme. Formation of the active enzyme involves a self-maturation process in which the active site pyruvoyl group is generated from an internal serine residue via an autocatalytic post-translational modification. Two non-identical subunits are generated from the proenzyme in this reaction, and the pyruvate is formed at the N-terminus of the alpha chain, which is derived from the carboxyl end of the proenzyme. The post-translation cleavage follows an unusual pathway, termed non-hydrolytic serinolysis, in which the side chain hydroxyl group of the serine supplies its oxygen atom to form the C-terminus of the beta chain, while the remainder of the serine residue undergoes an oxidative deamination to produce ammonia and the pyruvoyl group blocking the N-terminus of the alpha chain.

It catalyses the reaction S-adenosyl-L-methionine + H(+) = S-adenosyl 3-(methylsulfanyl)propylamine + CO2. It participates in amine and polyamine biosynthesis; S-adenosylmethioninamine biosynthesis; S-adenosylmethioninamine from S-adenosyl-L-methionine: step 1/1. In terms of biological role, catalyzes the decarboxylation of S-adenosylmethionine to S-adenosylmethioninamine (dcAdoMet), the propylamine donor required for the synthesis of the polyamines spermine and spermidine from the diamine putrescine. The protein is S-adenosylmethionine decarboxylase proenzyme of Thermotoga petrophila (strain ATCC BAA-488 / DSM 13995 / JCM 10881 / RKU-1).